Consider the following 425-residue polypeptide: Glutamate-1-semialdehyde 2,1-aminomutase (425 aa).

An N6-(pyridoxal phosphate)lysine modification is found at Lys266.

This sequence belongs to the class-III pyridoxal-phosphate-dependent aminotransferase family. HemL subfamily. Homodimer. It depends on pyridoxal 5'-phosphate as a cofactor.

It is found in the cytoplasm. The catalysed reaction is (S)-4-amino-5-oxopentanoate = 5-aminolevulinate. Its pathway is porphyrin-containing compound metabolism; protoporphyrin-IX biosynthesis; 5-aminolevulinate from L-glutamyl-tRNA(Glu): step 2/2. The protein is Glutamate-1-semialdehyde 2,1-aminomutase of Nitratidesulfovibrio vulgaris (strain DSM 19637 / Miyazaki F) (Desulfovibrio vulgaris).